Reading from the N-terminus, the 589-residue chain is Putative phospholipase B-like 2 (589 aa).

An N-terminal signal peptide occupies residues 1-41; the sequence is MVAPMYGSPGGRLARAVTRALALALVLALLVGLFLSGLTGA. N-linked (GlcNAc...) asparagine glycosylation is found at asparagine 88 and asparagine 110. A disulfide bond links cysteine 142 and cysteine 152. Residues asparagine 174, asparagine 231, asparagine 436, and asparagine 465 are each glycosylated (N-linked (GlcNAc...) asparagine). A disulfide bond links cysteine 492 and cysteine 495. N-linked (GlcNAc...) asparagine glycosylation is present at asparagine 515.

It belongs to the phospholipase B-like family. As to quaternary structure, interacts with IGF2R. Post-translationally, glycosylated; contains mannose 6-phosphate sugars.

The protein resides in the lysosome lumen. Functionally, putative phospholipase. In Bos taurus (Bovine), this protein is Putative phospholipase B-like 2 (PLBD2).